A 517-amino-acid polypeptide reads, in one-letter code: MTKNIHDQRILILDFGSQYTQLVARRIREIGVYCELWSWDVEEADIREFNPDGIILSGGPESVTEENSPRAPQYVFDSGVPVFGICYGMQTMAEQLGGKVATSTEREFGYAAVQVTGESALFADLETTQDVWMSHGDKVVEIPADFTKIAETDTCPYAAMANEEKKYYGVQFHPEVTHTKNGLKMLENFVLNACGCEGLWTSASIIEDAVARIKEQVGDDEVILGLSGGVDSSVVAMLAHRAIGDKLTCVFVDNGLLRLNEGEQVMEMFGDQFGLNIIKVDAEDRFLDALEGEAEPEAKRKIIGHVFVDIFDEESKKLKNAKWLAQGTIYPDVIESAASKTGKAHVIKSHHNVGGLPDDMEMGLVEPLRELFKDEVRKIGLELGLPYNMLYRHPFPGPGLGVRVLGEVKKEYCDLLRRADAIFIEELHAADLYHKVSQAFTVFLPVRSVGVMGDGRKYDWVVSLRAVETIDFMTAHWAHLPYDFLGKVSNRIINEVNGISRVVYDISGKPPATIEWE.

The Glutamine amidotransferase type-1 domain maps to 9-199 (RILILDFGSQ…VLNACGCEGL (191 aa)). Cys-86 (nucleophile) is an active-site residue. Catalysis depends on residues His-173 and Glu-175. A GMPS ATP-PPase domain is found at 200–392 (WTSASIIEDA…LGLPYNMLYR (193 aa)). Residue 227–233 (SGGVDSS) coordinates ATP.

Homodimer.

The enzyme catalyses XMP + L-glutamine + ATP + H2O = GMP + L-glutamate + AMP + diphosphate + 2 H(+). It functions in the pathway purine metabolism; GMP biosynthesis; GMP from XMP (L-Gln route): step 1/1. Catalyzes the synthesis of GMP from XMP. The protein is GMP synthase [glutamine-hydrolyzing] of Vibrio atlanticus (strain LGP32) (Vibrio splendidus (strain Mel32)).